Consider the following 215-residue polypeptide: MKYELTATEARVIGCLLEKQVTTPEQYPLSVNGVVTASNQKTNREPVMNLSEHEVQEQLDNLVKRHFLRTVSGFGNRVTKYEQRFCNSEFGNLKLSPAEVALIATLLLRGAQTPGELRSRASRMYEFSDMAEVESTLEQLAARDDGPYVVRLAREPGKRESRYMHLFCGEVDEPVSSDDAPQAASGDLHARVEALEGEVAELKQRLDSLLAHLGD.

The protein belongs to the UPF0502 family.

The protein is UPF0502 protein CKO_01995 of Citrobacter koseri (strain ATCC BAA-895 / CDC 4225-83 / SGSC4696).